The sequence spans 302 residues: Sulfate adenylyltransferase subunit 2 (302 aa).

The protein belongs to the PAPS reductase family. CysD subfamily. As to quaternary structure, heterodimer composed of CysD, the smaller subunit, and CysN.

The enzyme catalyses sulfate + ATP + H(+) = adenosine 5'-phosphosulfate + diphosphate. The protein operates within sulfur metabolism; hydrogen sulfide biosynthesis; sulfite from sulfate: step 1/3. In terms of biological role, with CysN forms the ATP sulfurylase (ATPS) that catalyzes the adenylation of sulfate producing adenosine 5'-phosphosulfate (APS) and diphosphate, the first enzymatic step in sulfur assimilation pathway. APS synthesis involves the formation of a high-energy phosphoric-sulfuric acid anhydride bond driven by GTP hydrolysis by CysN coupled to ATP hydrolysis by CysD. The sequence is that of Sulfate adenylyltransferase subunit 2 from Pectobacterium carotovorum subsp. carotovorum (strain PC1).